We begin with the raw amino-acid sequence, 993 residues long: Nisin biosynthesis protein NisB (993 aa).

The chain crosses the membrane as a helical span at residues Ala-838–Leu-851.

This sequence to B.subtilis SpaB and S.epidermidis EpiB.

The protein resides in the cell membrane. In terms of biological role, involved in the post-translational modification of the lantibiotic nisin. The chain is Nisin biosynthesis protein NisB (nisB) from Lactococcus lactis subsp. lactis (Streptococcus lactis).